A 140-amino-acid chain; its full sequence is Sec-independent protein translocase protein TatB (140 aa).

A helical transmembrane segment spans residues 2–22 (LPGIGFSELLLIGLAALIIIG). Residues 90–140 (VNSAVMREHPVSPPPPATPPAPPAELPPEAAPHADSQNAPPEADPAKGDRT) are disordered. The span at 100-119 (VSPPPPATPPAPPAELPPEA) shows a compositional bias: pro residues.

The protein belongs to the TatB family. As to quaternary structure, the Tat system comprises two distinct complexes: a TatABC complex, containing multiple copies of TatA, TatB and TatC subunits, and a separate TatA complex, containing only TatA subunits. Substrates initially bind to the TatABC complex, which probably triggers association of the separate TatA complex to form the active translocon.

Its subcellular location is the cell inner membrane. Part of the twin-arginine translocation (Tat) system that transports large folded proteins containing a characteristic twin-arginine motif in their signal peptide across membranes. Together with TatC, TatB is part of a receptor directly interacting with Tat signal peptides. TatB may form an oligomeric binding site that transiently accommodates folded Tat precursor proteins before their translocation. The protein is Sec-independent protein translocase protein TatB of Hyphomonas neptunium (strain ATCC 15444).